The sequence spans 427 residues: UPF0229 protein YeaH (427 aa).

Residues 79–90 are compositionally biased toward basic and acidic residues; sequence NDHFVQNDRIER. A disordered region spans residues 79-110; the sequence is NDHFVQNDRIERPQGGGGGSGSGQGQASQDGE. Gly residues predominate over residues 92 to 102; sequence QGGGGGSGSGQ.

The protein belongs to the UPF0229 family.

In Escherichia coli O9:H4 (strain HS), this protein is UPF0229 protein YeaH.